The following is a 306-amino-acid chain: MTLEELITEGRNPNTMDIDRLSTVDMLKKINEEDKKVPLAVEKVIPSIAEAIDRIVPRMKKGGRLIYVGAGTSGRIGILDASECPPTFGVDPGLVVGIIAGGDSAIRNAIESAEDDVEGGRQDLVNINLTERDSVIGISASGRTPYVIGALRYAKEVGALTIGLFCNENKNVENIVDVMITPIVGPEVIMGSTRMKAGTAQKLVLNMISTGVMIKLGKVYSNLMVDLQASNEKLRERARRMVKLATGAKEDLIERVLNETNYNVKLAILMIVGDMEKEKAQKLLEMADGYIAEAIKLKDLVLQGEE.

The region spanning 55–218 is the SIS domain; sequence IVPRMKKGGR…STGVMIKLGK (164 aa). Residue glutamate 83 is the Proton donor of the active site. Glutamate 114 is an active-site residue.

The protein belongs to the GCKR-like family. MurNAc-6-P etherase subfamily. In terms of assembly, homodimer.

The catalysed reaction is N-acetyl-D-muramate 6-phosphate + H2O = N-acetyl-D-glucosamine 6-phosphate + (R)-lactate. The protein operates within amino-sugar metabolism; N-acetylmuramate degradation. Functionally, specifically catalyzes the cleavage of the D-lactyl ether substituent of MurNAc 6-phosphate, producing GlcNAc 6-phosphate and D-lactate. The chain is N-acetylmuramic acid 6-phosphate etherase from Caldanaerobacter subterraneus subsp. tengcongensis (strain DSM 15242 / JCM 11007 / NBRC 100824 / MB4) (Thermoanaerobacter tengcongensis).